Here is a 326-residue protein sequence, read N- to C-terminus: NADH-specific methylglyoxal reductase (326 aa).

NAD(+) is bound by residues 20–21 and aspartate 54; that span reads TW. Tyrosine 59 functions as the Proton donor in the catalytic mechanism. Residues glutamine 189, 217-222, glycine 291, and glutamine 297 contribute to the NAD(+) site; that span reads YSPLEQ.

It belongs to the aldo/keto reductase family. Aldo/keto reductase 11 subfamily. As to quaternary structure, monomer.

It catalyses the reaction hydroxyacetone + NAD(+) = methylglyoxal + NADH + H(+). Its function is as follows. Catalyzes the NADH-dependent reduction of methylglyoxal (2-oxopropanal) in vitro. It is not known if this activity has physiological significance. Cannot use NADPH as a cosubstrate. Seems to play some role in intestinal colonization. The protein is NADH-specific methylglyoxal reductase (ydjG) of Escherichia coli (strain K12).